A 557-amino-acid polypeptide reads, in one-letter code: MPSTLIHDVQKELKDLPARGIVDFLIQYFFEDINWINQIVHPPRLLAQYENWWKMDTITRVADLEFAVLMLRICAYASHFLPSKKYTVDTIKGRPLSDIRSNCDRLAGRLEGICNAAVLRGSLVRVQYMAFTAMCYECDSRIKLSWDTLCCAIREAQEVGLHREPPMRGDDGMDDLEREMRRRMFCNLRLAKALDRVPFLVDAYCTVSLPQMHLHPTIANLQAPDLFTERVLQAQLVRFWKKLEAVNGPPGARPYDPVIAEERYQRFCNEFLPELPAPFALEPNTDWDQHIPELPRQRELFHVALFESVMHNFRQLLRLDQHHLRSLPNSRMALVTQHRHTLATAAMGLFQSVTSLHAMMSFNQTKLSLVIFYHFEMAVVLSLCIIRACDSNGMQDLEHINFFSPHSPLSSNMIDISQSQCLRTIKEARRQLEMMSLGSVMAETGARQLGILVDHVQATLARSGTQTRSMPSTETLTYNSSSSTSYGDGHAHGVSSELPFTFQQQEGPTANAFRTDSNVFEGLMLWDLSTDALPLDPSFLGLEQLHEISELQPNMGL.

The segment at 26-186 is fungal transcription factor domain; it reads IQYFFEDINW…EREMRRRMFC (161 aa). Residues 463–490 are disordered; sequence SGTQTRSMPSTETLTYNSSSSTSYGDGH. The span at 472 to 485 shows a compositional bias: low complexity; that stretch reads STETLTYNSSSSTS.

Its subcellular location is the nucleus. In terms of biological role, probable transcription factor that regulates the expression of the gene cluster that mediates the biosynthesis of the phytotoxin solanapyrone, a causal agent of early blight disease of potato and tomato. The chain is Probable transcription factor sol4 (sol4) from Alternaria solani.